We begin with the raw amino-acid sequence, 1186 residues long: Chromosome partition protein Smc (1186 aa).

Residue 32–39 (PNGSGKSN) participates in ATP binding. 2 coiled-coil regions span residues 167 to 206 (VLKY…EPLK) and 259 to 481 (SSAI…QAYQ). In terms of domain architecture, SMC hinge spans 519–637 (GIRGAVLELI…EDLKGANELA (119 aa)). Coiled coils occupy residues 672–864 (LLGR…MSSS), 893–943 (RDQR…NLLQ), and 990–1029 (SIDE…DEEM).

The protein belongs to the SMC family. Homodimer.

It is found in the cytoplasm. Required for chromosome condensation and partitioning. The sequence is that of Chromosome partition protein Smc from Bacillus subtilis (strain 168).